Consider the following 716-residue polypeptide: Amino-acid acetyltransferase, mitochondrial (716 aa).

The N-terminal 44 residues, 1–44 (MSLHTGWPRTVNSSFLKKHRSSLCTCQHTSSVLPRSFSTTPDRH), are a transit peptide targeting the mitochondrion. A compositionally biased stretch (polar residues) spans 37 to 56 (FSTTPDRHVQQSADFSSTSR). Disordered stretches follow at residues 37 to 58 (FSTT…SRSY) and 96 to 121 (KAQH…TLPS). Residues 101–112 (KSPDANKPEPEK) show a composition bias toward basic and acidic residues. Residues 537 to 706 (SRPRLKLDDP…YEAVCRSIQP (170 aa)) form the N-acetyltransferase domain.

This sequence belongs to the acetyltransferase family.

It localises to the mitochondrion. The catalysed reaction is L-glutamate + acetyl-CoA = N-acetyl-L-glutamate + CoA + H(+). It functions in the pathway amino-acid biosynthesis; L-arginine biosynthesis; N(2)-acetyl-L-ornithine from L-glutamate: step 1/4. Functionally, N-acetylglutamate synthase involved in arginine biosynthesis. This is Amino-acid acetyltransferase, mitochondrial (arg2) from Aspergillus fumigatus (strain CBS 144.89 / FGSC A1163 / CEA10) (Neosartorya fumigata).